A 717-amino-acid polypeptide reads, in one-letter code: Mitochondrial potassium channel ATP-binding subunit (717 aa).

The transit peptide at 1–25 (MLVHLFRFGIRGGPVPGWSLQSLRF) directs the protein to the mitochondrion. Transmembrane regions (helical) follow at residues 127–147 (LLAL…NVQI), 178–198 (VQLL…LVLL), 278–298 (LMLA…GSGL), and 365–385 (NIAF…LVAG). Residues 132–419 (AAIVLALGAA…LSVLFGQVVR (288 aa)) enclose the ABC transmembrane type-1 domain. Residues 454 to 691 (ITFQNVTFSY…GGLYSELIRR (238 aa)) enclose the ABC transporter domain. 489–496 (GQSGGGKT) is a binding site for ATP. A disordered region spans residues 695-717 (DASLTSTPPAEKPEDPKSCQSKA).

This sequence belongs to the ABC transporter superfamily. ABCB family. Multidrug resistance exporter (TC 3.A.1.201) subfamily. As to quaternary structure, the mitochondrial potassium channel (mitoK(ATP)) is composed of 4 subunits of CCDC51/MITOK and 4 subunits of ABCB8/MITOSUR. Interacts with PAAT. Interacts with NRP1; NRP1 regulates ABCB8/MITOSUR protein levels in mitochondria.

The protein localises to the mitochondrion inner membrane. Channel activity inhibited by ATP via ABCB8/MITOSUR subunit. In terms of biological role, ATP-binding subunit of the mitochondrial ATP-gated potassium channel (mitoK(ATP)). Together with pore-forming subunit CCDC51/MITOK of the mitoK(ATP) channel, mediates ATP-dependent potassium currents across the mitochondrial inner membrane. An increase in ATP intracellular levels closes the channel, inhibiting K(+) transport, whereas a decrease in ATP levels enhances K(+) uptake in the mitochondrial matrix. Plays a role in mitochondrial iron transport. Required for maintenance of normal cardiac function, possibly by influencing mitochondrial iron export and regulating the maturation of cytosolic iron sulfur cluster-containing enzymes. This chain is Mitochondrial potassium channel ATP-binding subunit, found in Mus musculus (Mouse).